A 126-amino-acid chain; its full sequence is Small ribosomal subunit protein eS6 (126 aa).

This sequence belongs to the eukaryotic ribosomal protein eS6 family.

This is Small ribosomal subunit protein eS6 from Methanothermobacter thermautotrophicus (strain ATCC 29096 / DSM 1053 / JCM 10044 / NBRC 100330 / Delta H) (Methanobacterium thermoautotrophicum).